The chain runs to 95 residues: DNA-directed RNA polymerase subunit Rpo11 (95 aa).

This sequence belongs to the archaeal Rpo11/eukaryotic RPB11/RPC19 RNA polymerase subunit family. Part of the RNA polymerase complex.

It is found in the cytoplasm. The catalysed reaction is RNA(n) + a ribonucleoside 5'-triphosphate = RNA(n+1) + diphosphate. DNA-dependent RNA polymerase (RNAP) catalyzes the transcription of DNA into RNA using the four ribonucleoside triphosphates as substrates. The protein is DNA-directed RNA polymerase subunit Rpo11 of Pyrococcus abyssi (strain GE5 / Orsay).